The sequence spans 178 residues: Large ribosomal subunit protein bL17 (178 aa).

Belongs to the bacterial ribosomal protein bL17 family. Part of the 50S ribosomal subunit. Contacts protein L32.

This chain is Large ribosomal subunit protein bL17, found in Lachnospira eligens (strain ATCC 27750 / DSM 3376 / VPI C15-48 / C15-B4) (Eubacterium eligens).